A 736-amino-acid polypeptide reads, in one-letter code: Phosphoribosylformylglycinamidine synthase subunit PurL (736 aa).

The active site involves His-48. Residues Tyr-51 and Lys-90 each coordinate ATP. Glu-92 is a Mg(2+) binding site. Substrate contacts are provided by residues 93-96 and Arg-115; that span reads SHNH. His-94 serves as the catalytic Proton acceptor. Asp-116 is a Mg(2+) binding site. Gln-239 lines the substrate pocket. Residue Asp-267 coordinates Mg(2+). Substrate is bound at residue 311-313; that stretch reads ESQ. The ATP site is built by Asp-492 and Gly-529. Asn-530 provides a ligand contact to Mg(2+). Position 532 (Ser-532) interacts with substrate.

It belongs to the FGAMS family. As to quaternary structure, monomer. Part of the FGAM synthase complex composed of 1 PurL, 1 PurQ and 2 PurS subunits.

It localises to the cytoplasm. It carries out the reaction N(2)-formyl-N(1)-(5-phospho-beta-D-ribosyl)glycinamide + L-glutamine + ATP + H2O = 2-formamido-N(1)-(5-O-phospho-beta-D-ribosyl)acetamidine + L-glutamate + ADP + phosphate + H(+). It functions in the pathway purine metabolism; IMP biosynthesis via de novo pathway; 5-amino-1-(5-phospho-D-ribosyl)imidazole from N(2)-formyl-N(1)-(5-phospho-D-ribosyl)glycinamide: step 1/2. In terms of biological role, part of the phosphoribosylformylglycinamidine synthase complex involved in the purines biosynthetic pathway. Catalyzes the ATP-dependent conversion of formylglycinamide ribonucleotide (FGAR) and glutamine to yield formylglycinamidine ribonucleotide (FGAM) and glutamate. The FGAM synthase complex is composed of three subunits. PurQ produces an ammonia molecule by converting glutamine to glutamate. PurL transfers the ammonia molecule to FGAR to form FGAM in an ATP-dependent manner. PurS interacts with PurQ and PurL and is thought to assist in the transfer of the ammonia molecule from PurQ to PurL. The sequence is that of Phosphoribosylformylglycinamidine synthase subunit PurL from Beijerinckia indica subsp. indica (strain ATCC 9039 / DSM 1715 / NCIMB 8712).